The chain runs to 577 residues: Proline--tRNA ligase (577 aa).

The protein belongs to the class-II aminoacyl-tRNA synthetase family. ProS type 1 subfamily. As to quaternary structure, homodimer.

Its subcellular location is the cytoplasm. The enzyme catalyses tRNA(Pro) + L-proline + ATP = L-prolyl-tRNA(Pro) + AMP + diphosphate. In terms of biological role, catalyzes the attachment of proline to tRNA(Pro) in a two-step reaction: proline is first activated by ATP to form Pro-AMP and then transferred to the acceptor end of tRNA(Pro). As ProRS can inadvertently accommodate and process non-cognate amino acids such as alanine and cysteine, to avoid such errors it has two additional distinct editing activities against alanine. One activity is designated as 'pretransfer' editing and involves the tRNA(Pro)-independent hydrolysis of activated Ala-AMP. The other activity is designated 'posttransfer' editing and involves deacylation of mischarged Ala-tRNA(Pro). The misacylated Cys-tRNA(Pro) is not edited by ProRS. The sequence is that of Proline--tRNA ligase from Chlamydia abortus (strain DSM 27085 / S26/3) (Chlamydophila abortus).